Here is a 519-residue protein sequence, read N- to C-terminus: Bifunctional purine biosynthesis protein PurH (519 aa).

The 147-residue stretch at 1-147 folds into the MGS-like domain; the sequence is MAKITRALIS…KNNHDVTVLV (147 aa).

It belongs to the PurH family.

The enzyme catalyses (6R)-10-formyltetrahydrofolate + 5-amino-1-(5-phospho-beta-D-ribosyl)imidazole-4-carboxamide = 5-formamido-1-(5-phospho-D-ribosyl)imidazole-4-carboxamide + (6S)-5,6,7,8-tetrahydrofolate. The catalysed reaction is IMP + H2O = 5-formamido-1-(5-phospho-D-ribosyl)imidazole-4-carboxamide. It functions in the pathway purine metabolism; IMP biosynthesis via de novo pathway; 5-formamido-1-(5-phospho-D-ribosyl)imidazole-4-carboxamide from 5-amino-1-(5-phospho-D-ribosyl)imidazole-4-carboxamide (10-formyl THF route): step 1/1. Its pathway is purine metabolism; IMP biosynthesis via de novo pathway; IMP from 5-formamido-1-(5-phospho-D-ribosyl)imidazole-4-carboxamide: step 1/1. This Trichlorobacter lovleyi (strain ATCC BAA-1151 / DSM 17278 / SZ) (Geobacter lovleyi) protein is Bifunctional purine biosynthesis protein PurH.